The following is a 476-amino-acid chain: MASRPVTLGIDLGTTSVKAALLEAAPSLPSGFVVLASCARAARAETESAVAGPQGREQDVTRIIQALNECLDALPRQQLQRVRGIGVSGQMHGILFWKAGQGCEWMEGGPAFVFEPRAVSHLVTWQDGRCNSSFLASLPKPDSHLSVATGFGCATIFWLLKNSPEFLKSYDAAGTIQDYVVAMLCGLPRPLMSDQNAASWGYFNTQSQSWNLDTLEKAGFPIHLLPDIAEPGSMAGRTSHTWFEIPKGTQVGIALGDLQASVYSCMGQRTDAVLNISTSVQLAASMPVGFQPLQTPDPAAPVAFFPYFDRTYLGVAASLNGGNVLATFVHMLVQWMADLGLEVEESTVYSRMIQAAAQQKDTHLTITPTVLGERHLPDQLASVTRISSSDLSLGHVTRALCRGIVQNLHSMLPFQQLKEWGVARVVGSGSALSRNEVLKQEVQRAFPFPVCFGQDVDAAFGAALVMLQRDLSQKEP.

It belongs to the FGGY kinase family.

The protein localises to the cytoplasm. The enzyme catalyses sedoheptulose + ATP = D-sedoheptulose 7-phosphate + ADP + H(+). Acts as a modulator of macrophage activation through control of glucose metabolism. This Mus musculus (Mouse) protein is Sedoheptulokinase (Shpk).